Reading from the N-terminus, the 385-residue chain is Acetylornithine deacetylase (385 aa).

H80 lines the Zn(2+) pocket. Residue D82 is part of the active site. D112 is a binding site for Zn(2+). The active-site Proton acceptor is the E144. E145, E169, and H355 together coordinate Zn(2+).

The protein belongs to the peptidase M20A family. ArgE subfamily. In terms of assembly, homodimer. The cofactor is Zn(2+). It depends on Co(2+) as a cofactor. Requires glutathione as cofactor.

The protein localises to the cytoplasm. The catalysed reaction is N(2)-acetyl-L-ornithine + H2O = L-ornithine + acetate. It participates in amino-acid biosynthesis; L-arginine biosynthesis; L-ornithine from N(2)-acetyl-L-ornithine (linear): step 1/1. Its function is as follows. Catalyzes the hydrolysis of the amide bond of N(2)-acetylated L-amino acids. Cleaves the acetyl group from N-acetyl-L-ornithine to form L-ornithine, an intermediate in L-arginine biosynthesis pathway, and a branchpoint in the synthesis of polyamines. This Photorhabdus laumondii subsp. laumondii (strain DSM 15139 / CIP 105565 / TT01) (Photorhabdus luminescens subsp. laumondii) protein is Acetylornithine deacetylase.